The primary structure comprises 362 residues: Dihydroorotate dehydrogenase (quinone) (362 aa).

FMN contacts are provided by residues 62 to 66 (AGYDK) and threonine 86. Position 66 (lysine 66) interacts with substrate. 111–115 (NRLGF) lines the substrate pocket. FMN contacts are provided by asparagine 139 and asparagine 170. Asparagine 170 contributes to the substrate binding site. The active-site Nucleophile is the serine 173. Residue asparagine 175 participates in substrate binding. FMN is bound by residues lysine 215 and serine 243. 244-245 (NT) contacts substrate. Residues glycine 266, glycine 295, and 316–317 (YS) contribute to the FMN site.

Belongs to the dihydroorotate dehydrogenase family. Type 2 subfamily. As to quaternary structure, monomer. It depends on FMN as a cofactor.

It is found in the cell membrane. It catalyses the reaction (S)-dihydroorotate + a quinone = orotate + a quinol. The protein operates within pyrimidine metabolism; UMP biosynthesis via de novo pathway; orotate from (S)-dihydroorotate (quinone route): step 1/1. In terms of biological role, catalyzes the conversion of dihydroorotate to orotate with quinone as electron acceptor. In Rhizobium rhizogenes (strain K84 / ATCC BAA-868) (Agrobacterium radiobacter), this protein is Dihydroorotate dehydrogenase (quinone).